Here is a 484-residue protein sequence, read N- to C-terminus: Protein nucleotidyltransferase YdiU (484 aa).

The ATP site is built by glycine 81, glycine 83, arginine 84, lysine 103, aspartate 115, glycine 116, arginine 166, and arginine 173. Catalysis depends on aspartate 244, which acts as the Proton acceptor. Mg(2+)-binding residues include asparagine 245 and aspartate 254. Position 254 (aspartate 254) interacts with ATP.

The protein belongs to the SELO family. Requires Mg(2+) as cofactor. Mn(2+) serves as cofactor.

The enzyme catalyses L-seryl-[protein] + ATP = 3-O-(5'-adenylyl)-L-seryl-[protein] + diphosphate. It carries out the reaction L-threonyl-[protein] + ATP = 3-O-(5'-adenylyl)-L-threonyl-[protein] + diphosphate. The catalysed reaction is L-tyrosyl-[protein] + ATP = O-(5'-adenylyl)-L-tyrosyl-[protein] + diphosphate. It catalyses the reaction L-histidyl-[protein] + UTP = N(tele)-(5'-uridylyl)-L-histidyl-[protein] + diphosphate. The enzyme catalyses L-seryl-[protein] + UTP = O-(5'-uridylyl)-L-seryl-[protein] + diphosphate. It carries out the reaction L-tyrosyl-[protein] + UTP = O-(5'-uridylyl)-L-tyrosyl-[protein] + diphosphate. Functionally, nucleotidyltransferase involved in the post-translational modification of proteins. It can catalyze the addition of adenosine monophosphate (AMP) or uridine monophosphate (UMP) to a protein, resulting in modifications known as AMPylation and UMPylation. This Shewanella sp. (strain MR-7) protein is Protein nucleotidyltransferase YdiU.